The following is a 303-amino-acid chain: Methionyl-tRNA formyltransferase (303 aa).

A (6S)-5,6,7,8-tetrahydrofolate-binding site is contributed by 110–113 (SLLP).

The protein belongs to the Fmt family.

The catalysed reaction is L-methionyl-tRNA(fMet) + (6R)-10-formyltetrahydrofolate = N-formyl-L-methionyl-tRNA(fMet) + (6S)-5,6,7,8-tetrahydrofolate + H(+). Attaches a formyl group to the free amino group of methionyl-tRNA(fMet). The formyl group appears to play a dual role in the initiator identity of N-formylmethionyl-tRNA by promoting its recognition by IF2 and preventing the misappropriation of this tRNA by the elongation apparatus. This chain is Methionyl-tRNA formyltransferase, found in Campylobacter lari (strain RM2100 / D67 / ATCC BAA-1060).